Consider the following 436-residue polypeptide: Serine/threonine-protein kinase STK11 (436 aa).

S31 bears the Phosphoserine mark. N6-acetyllysine occurs at positions 44 and 48. The interval 45 to 90 is sufficient for interaction with SIRT1; that stretch reads LIGKYLMGDLLGEGSYGKVKEVLDSETLCRRAVKILKKKKLRRIPN. A Protein kinase domain is found at 49–309; it reads YLMGDLLGEG…IRQIRQHSWF (261 aa). ATP contacts are provided by residues 55–63 and K78; that span reads LGEGSYGKV. N6-acetyllysine occurs at positions 96 and 97. D176 serves as the catalytic Proton acceptor. Residue T189 is modified to Phosphothreonine; by autocatalysis. N6-acetyllysine is present on residues K296 and K311. Position 325 is a phosphoserine (S325). T336 bears the Phosphothreonine; by autocatalysis mark. Residue T366 is modified to Phosphothreonine; by ATM and autocatalysis. Residues 397-421 form a disordered region; that stretch reads GTEPQLSSKVKPEGRPGAANPARKV. S403 carries the phosphoserine modification. The residue at position 420 (K420) is an N6-acetyllysine. A lipid anchor (S-palmitoyl cysteine) is attached at C422. Residue K426 is modified to N6-acetyllysine. Phosphoserine; by autocatalysis, PKA, PKC/PRKCZ and RPS6KA1 is present on S431. C433 is modified (cysteine methyl ester). The S-farnesyl cysteine moiety is linked to residue C433. The residue at position 434 (K434) is an N6-acetyllysine. A propeptide spans 434 to 436 (removed in mature form); the sequence is KQQ.

This sequence belongs to the protein kinase superfamily. CAMK Ser/Thr protein kinase family. LKB1 subfamily. In terms of assembly, catalytic component of a trimeric complex composed of STK11/LKB1, STRAD (STRADA or STRADB) and CAB39/MO25 (CAB39/MO25alpha or CAB39L/MO25beta): the complex tethers STK11/LKB1 in the cytoplasm and stimulates its catalytic activity. Found in a ternary complex composed of SMAD4, STK11/LKB1 and STK11IP. Interacts with NR4A1, p53/TP53, SMAD4, STK11IP and WDR6. Interacts with NISCH; this interaction may increase STK11 activity. Interacts with SIRT1; the interaction deacetylates STK11. Interacts with CDKN1A. Mg(2+) is required as a cofactor. Requires Mn(2+) as cofactor. Phosphorylated by ATM at Thr-366 following ionizing radiation (IR). Phosphorylation at Ser-431 by RPS6KA1 and/or some PKA is required to inhibit cell growth. Phosphorylation at Ser-431 is also required during neuronal polarization to mediate phosphorylation of BRSK1 and BRSK2. Phosphorylation by PKC/PRKCZ at Ser-397 in isoform 2 promotes metformin (or peroxynitrite)-induced nuclear export of STK11 and activation of AMPK. UV radiation -induced phosphorylation at Thr-366 mediates CDKN1A degradation. Post-translationally, acetylated. Deacetylation at Lys-48 enhances cytoplasmic localization and kinase activity in vitro. In terms of tissue distribution, expressed in brain, heart, testis, skeletal muscle and spleen, and weakly in liver and kidney. Isoform 1 is expressed at highest levels in the brain. Isoform 2 is expressed at highest levels in the testis, primarily in postmitotic developing germ cells (at protein level).

Its subcellular location is the nucleus. It localises to the cytoplasm. It is found in the membrane. The protein resides in the mitochondrion. It catalyses the reaction L-seryl-[protein] + ATP = O-phospho-L-seryl-[protein] + ADP + H(+). The catalysed reaction is L-threonyl-[protein] + ATP = O-phospho-L-threonyl-[protein] + ADP + H(+). Activated by forming a complex with STRAD (STRADA or STRADB) and CAB39/MO25 (CAB39/MO25alpha or CAB39L/MO25beta): STRADA (or STRADB)-binding promotes a conformational change of STK11/LKB1 in an active conformation, which is stabilized by CAB39/MO25alpha (or CAB39L/MO25beta) interacting with the STK11/LKB1 activation loop. Sequestration in the nucleus by NR4A1 prevents it from phosphorylating and activating cytoplasmic AMPK. Functionally, tumor suppressor serine/threonine-protein kinase that controls the activity of AMP-activated protein kinase (AMPK) family members, thereby playing a role in various processes such as cell metabolism, cell polarity, apoptosis and DNA damage response. Acts by phosphorylating the T-loop of AMPK family proteins, thus promoting their activity: phosphorylates PRKAA1, PRKAA2, BRSK1, BRSK2, MARK1, MARK2, MARK3, MARK4, NUAK1, NUAK2, SIK1, SIK2, SIK3 and SNRK but not MELK. Also phosphorylates non-AMPK family proteins such as STRADA, PTEN and possibly p53/TP53. Acts as a key upstream regulator of AMPK by mediating phosphorylation and activation of AMPK catalytic subunits PRKAA1 and PRKAA2 and thereby regulates processes including: inhibition of signaling pathways that promote cell growth and proliferation when energy levels are low, glucose homeostasis in liver, activation of autophagy when cells undergo nutrient deprivation, and B-cell differentiation in the germinal center in response to DNA damage. Also acts as a regulator of cellular polarity by remodeling the actin cytoskeleton. Required for cortical neuron polarization by mediating phosphorylation and activation of BRSK1 and BRSK2, leading to axon initiation and specification. Involved in DNA damage response: interacts with p53/TP53 and recruited to the CDKN1A/WAF1 promoter to participate in transcription activation. Able to phosphorylate p53/TP53; the relevance of such result in vivo is however unclear and phosphorylation may be indirect and mediated by downstream STK11/LKB1 kinase NUAK1. Also acts as a mediator of p53/TP53-dependent apoptosis via interaction with p53/TP53: translocates to the mitochondrion during apoptosis and regulates p53/TP53-dependent apoptosis pathways. Regulates UV radiation-induced DNA damage response mediated by CDKN1A. In association with NUAK1, phosphorylates CDKN1A in response to UV radiation and contributes to its degradation which is necessary for optimal DNA repair. Its function is as follows. Has a role in spermiogenesis. The polypeptide is Serine/threonine-protein kinase STK11 (Rattus norvegicus (Rat)).